Reading from the N-terminus, the 408-residue chain is MGINEIIMYIMMFFMLIAAVDRILSQFGGSARFLGKFGKSIEGSGGQFEEGFMAMGALGLAMVGMTALAPVLAHVLGPVIIPVYEMLGANPSMFAGTLLACDMGGFFLAKELAGGDVAAWLYSGLILGSMMGPTIVFSIPVALGIIEPSDRRYLALGVLAGIVTIPIGCIAGGLVAMYSGVQINGQPVEFTFALILMNMIPVIIVAILVALGLKFIPEKMINGFQIFAKFLVALITLGLAAAVVKFLLGWELIPGLDPIFMAPGDKPGEVMRAIEVIGSISCVLLGAYPMVLLLTRWFEKPLMSVGKVLNMNNIAAAGMVATLANNIPMFGMMKQMDTRGKVINCAFAVSAAFALGDHLGFAAANMNAMIFPMIVGKLIGGVTAIGVAMMLVPKEDATATKTEAEAQS.

Transmembrane regions (helical) follow at residues 1-21 (MGIN…AAVD), 61-81 (AMVG…PVII), 89-109 (ANPS…FFLA), 126-146 (ILGS…LGII), 155-175 (ALGV…GGLV), 192-212 (FALI…VALG), 230-250 (FLVA…LLGW), 274-294 (IEVI…VLLL), 313-333 (NIAA…FGMM), 342-362 (VINC…LGFA), and 369-389 (MIFP…GVAM).

The protein belongs to the EutH family.

The protein localises to the cell inner membrane. It catalyses the reaction ethanolamine(in) = ethanolamine(out). The protein operates within amine and polyamine degradation; ethanolamine degradation. Probably involved in the diffusion of protonated ethanolamine (EA) into the cell at low pH. At low pH most EA is protonated, and this permease becomes necessary. The chain is Probable ethanolamine permease EutH (eutH) from Escherichia coli (strain K12).